A 1018-amino-acid chain; its full sequence is Fibronectin-binding protein A (1018 aa).

A signal peptide spans 1 to 36 (MKNNLRYGIRKHKLGAASVFLGTMIVVGMGQDKEAA). The short motif at 7 to 18 (YGIRKHKLGAAS) is the YSIRK-G/S signaling motif element. The interval 37–511 (ASEQKTTTVE…SNKANGNEKN (475 aa)) is ligand-binding A region. 2 disordered regions span residues 38-61 (SEQK…SETQ) and 78-195 (ATVT…ETGT). 2 stretches are compositionally biased toward polar residues: residues 39 to 61 (EQKT…SETQ) and 78 to 92 (ATVT…QVTT). Residues 112 to 126 (TVKEEVVKEEAKPQV) show a composition bias toward basic and acidic residues. Polar residues predominate over residues 129-139 (TTQSQDNSGDQ). Residues 194-511 (GTDVTSKVTV…SNKANGNEKN (318 aa)) are fibrinogen/elastin/tropoelastin-binding. The interval 512–872 (GPIIQNNKFE…EGQQTIEEDT (361 aa)) is fibronectin-binding. One copy of the B-1 repeat lies at 545 to 574 (EEYDSSTLDIDYHTAIDGGGGYVDGYIETI). The tract at residues 545-604 (EEYDSSTLDIDYHTAIDGGGGYVDGYIETIEETDSSAIDIDYHTAVDSEAGHVGGYTESS) is 2 X approximate tandem repeats. The B-2 repeat unit spans residues 575-604 (EETDSSAIDIDYHTAVDSEAGHVGGYTESS). Disordered stretches follow at residues 595–622 (GHVG…NSKH), 740–813 (LGYE…DIDF), and 827–997 (EIIE…GMLF). A D-1 repeat occupies 745-782 (GQNSGNQSFEEDTEEDKPKYEQGGNIVDIDFDSVPQIH). The segment at 745–878 (GQNSGNQSFE…EEDTTPPIVP (134 aa)) is 4 X approximate tandem repeats, D-3 repeat has more fibronectin-binding activity. One copy of the D-2 repeat lies at 783-820 (GQNKGNQSFEEDTEKDKPKYEHGGNIIDIDFDSVPHIH). The stretch at 821–859 (GFNKHTEIIEEDTNKDKPSYQFGGHNSVDFEEDTLPKVS) is one D-3 repeat. Over residues 827 to 838 (EIIEEDTNKDKP) the composition is skewed to basic and acidic residues. A D-4; truncated repeat occupies 860 to 878 (GQNEGQQTIEEDTTPPIVP). Residues 875 to 938 (PIVPPTPPTP…PAEPGKPVPP (64 aa)) are compositionally biased toward pro residues. WR repeat units lie at residues 879–892 (PTPP…EPET), 893–906 (PTPP…EPET), 907–920 (PTPP…EPET), 921–934 (PTPP…EPGK), and 935–948 (PVPP…KPSK). The interval 879–948 (PTPPTPEVPS…AKEEPKKPSK (70 aa)) is 5 X tandem repeats, Pro-rich (WR). The short motif at 982–986 (LPETG) is the LPXTG sorting signal element. Thr-985 is modified (pentaglycyl murein peptidoglycan amidated threonine). The propeptide at 986–1018 (GGEESTNKGMLFGGLFSILGLALLRRNKKNHKA) is removed by sortase.

Its subcellular location is the secreted. It localises to the cell wall. In terms of biological role, possesses multiple, substituting fibronectin (Fn) binding regions, each capable of conferring adherence to both soluble and immobilized forms of Fn. This confers to S.aureus the ability to invade endothelial cells both in vivo and in vitro, without requiring additional factors, although in a slow and inefficient way through actin rearrangements in host cells. This invasion process is mediated by integrin alpha-5/beta-1. Promotes bacterial attachment to both soluble and immobilized forms of fibrinogen (Fg) by means of a unique binding site localized within the 17 C-terminal residues of the gamma-chain of human Fg. Both plasma proteins (Fn and Fg) function as a bridge between bacterium and host cell. Promotes attachment to immobilized elastin peptides in a dose-dependent and saturable manner. Promotes attachment to both full-length and segments of immobilized human tropoelastin at multiple sites in a dose and pH-dependent manner. Promotes adherence to and aggregation of activated platelets independently of other S.aureus surface molecules. Is a critical mediator implicated in the induction of experimental endocarditis in rats with catheter-induced aortic vegetations, promoting both colonization and persistence of the bacterium into the host. This chain is Fibronectin-binding protein A (fnbA), found in Staphylococcus aureus (strain NCTC 8325 / PS 47).